The primary structure comprises 156 residues: ATP synthase subunit b (156 aa).

The helical transmembrane segment at 7–27 threads the bilayer; that stretch reads IFFQMLVFFVLGWFTMKFVWP.

Belongs to the ATPase B chain family. F-type ATPases have 2 components, F(1) - the catalytic core - and F(0) - the membrane proton channel. F(1) has five subunits: alpha(3), beta(3), gamma(1), delta(1), epsilon(1). F(0) has three main subunits: a(1), b(2) and c(10-14). The alpha and beta chains form an alternating ring which encloses part of the gamma chain. F(1) is attached to F(0) by a central stalk formed by the gamma and epsilon chains, while a peripheral stalk is formed by the delta and b chains.

The protein localises to the cell inner membrane. Its function is as follows. F(1)F(0) ATP synthase produces ATP from ADP in the presence of a proton or sodium gradient. F-type ATPases consist of two structural domains, F(1) containing the extramembraneous catalytic core and F(0) containing the membrane proton channel, linked together by a central stalk and a peripheral stalk. During catalysis, ATP synthesis in the catalytic domain of F(1) is coupled via a rotary mechanism of the central stalk subunits to proton translocation. Component of the F(0) channel, it forms part of the peripheral stalk, linking F(1) to F(0). The chain is ATP synthase subunit b from Bordetella petrii (strain ATCC BAA-461 / DSM 12804 / CCUG 43448).